Consider the following 695-residue polypeptide: Translation initiation factor IF-2 (695 aa).

The tract at residues 60 to 92 (KKSASSKKKTEKEVEEEEIETPKKKKKQEEKIP) is disordered. In terms of domain architecture, tr-type G spans 184-358 (QRPPVVTVMG…EMSEIKCIPT (175 aa)). The segment at 193–200 (GHVDHGKT) is G1. 193-200 (GHVDHGKT) is a binding site for GTP. A G2 region spans residues 218–222 (GITQS). Residues 239–242 (DTPG) are G3. Residues 239–243 (DTPGH) and 293–296 (NKID) each bind GTP. Residues 293 to 296 (NKID) are G4. The interval 330–332 (SAK) is G5.

It belongs to the TRAFAC class translation factor GTPase superfamily. Classic translation factor GTPase family. IF-2 subfamily.

The protein resides in the cytoplasm. Its function is as follows. One of the essential components for the initiation of protein synthesis. Protects formylmethionyl-tRNA from spontaneous hydrolysis and promotes its binding to the 30S ribosomal subunits. Also involved in the hydrolysis of GTP during the formation of the 70S ribosomal complex. The protein is Translation initiation factor IF-2 of Kosmotoga olearia (strain ATCC BAA-1733 / DSM 21960 / TBF 19.5.1).